The sequence spans 260 residues: Malonyl-[acyl-carrier protein] O-methyltransferase (260 aa).

Belongs to the methyltransferase superfamily.

The catalysed reaction is malonyl-[ACP] + S-adenosyl-L-methionine = malonyl-[ACP] methyl ester + S-adenosyl-L-homocysteine. Its pathway is cofactor biosynthesis; biotin biosynthesis. Converts the free carboxyl group of a malonyl-thioester to its methyl ester by transfer of a methyl group from S-adenosyl-L-methionine (SAM). It allows to synthesize pimeloyl-ACP via the fatty acid synthetic pathway. This is Malonyl-[acyl-carrier protein] O-methyltransferase from Haemophilus influenzae (strain ATCC 51907 / DSM 11121 / KW20 / Rd).